The primary structure comprises 750 residues: Cellulose synthase-like protein H1 (750 aa).

A run of 2 helical transmembrane segments spans residues leucine 27–alanine 47 and alanine 52–tryptophan 72. Residues aspartate 137 and aspartate 459 contribute to the active site. 6 consecutive transmembrane segments (helical) span residues valine 537–leucine 557, glycine 570–isoleucine 590, isoleucine 608–phenylalanine 628, valine 664–tryptophan 684, glycine 697–leucine 717, and glycine 727–cysteine 747.

Belongs to the glycosyltransferase 2 family. Plant cellulose synthase-like H subfamily.

The protein resides in the golgi apparatus membrane. Its function is as follows. Thought to be a Golgi-localized beta-glycan synthase that polymerize the backbones of noncellulosic polysaccharides (hemicelluloses) of plant cell wall. The sequence is that of Cellulose synthase-like protein H1 (CSLH1) from Oryza sativa subsp. japonica (Rice).